We begin with the raw amino-acid sequence, 359 residues long: Growth hormone-regulated TBC protein 1 (359 aa).

Residues 74 to 281 (GIPLEHRARV…RIWDCLFNEG (208 aa)) enclose the Rab-GAP TBC domain.

As to expression, highly expressed in testes, expression greatly increased at postnatal day 20 and remained high up to day 90. Moderately expressed in kidney and liver, weakly expressed in intestine, lung, ovaries and stomach. Expression of Growth hormone increased the expression in testis but decreased expression in liver and kidney.

In terms of biological role, may act as a GTPase-activating protein for Rab family protein(s). The chain is Growth hormone-regulated TBC protein 1 (Grtp1) from Mus musculus (Mouse).